A 127-amino-acid polypeptide reads, in one-letter code: Large-conductance mechanosensitive channel (127 aa).

A run of 3 helical transmembrane segments spans residues 9–29, 32–52, and 75–95; these read EFAM…GVAF, IVTA…LGGI, and VIDF…INLL.

Belongs to the MscL family. In terms of assembly, homopentamer.

The protein localises to the cell inner membrane. Functionally, channel that opens in response to stretch forces in the membrane lipid bilayer. May participate in the regulation of osmotic pressure changes within the cell. This Legionella pneumophila (strain Paris) protein is Large-conductance mechanosensitive channel.